Consider the following 519-residue polypeptide: MTEPLLTMRGIVKAFDGVKALDGIDLTVRPGECVGLCGENGAGKSTLMKVLSGVYPHGTWDGEIRWEGAPLAASGVRDTERAGIVIIHQELMLVPELSVAENIFLGNEITLPGGRMNFAAMVQRAEELLRELRIDTINVAQPVMNYGGGHQQLIEIAKALNKHAKLLILDEPSSSLSASETRILLDIVRDLKRRGVACVYISHKLDEVAAVCDTVTVIRDGRHVATEPMATLTTDRIIAMMVGREIRDLYPREPHEIGDVVLDVRHVTCRDVTNARRKRVDDVSFSVRRGEIVGVAGLVGAGRTELMQAIFGAYPGACTASVTMNGKPLSIRSPADAIRAGIAMVPEDRKRHGIVPQLGVGHNITLAVLRRFAARGRIDAAAELDTIRTEMQRLSVRAAHPFLSIASLSGGNQQKAVLAKMLLTEPQVLILDEPTRGVDVGAKAEIYRLIFALAQRGVALIVVSSELPEVLGLADRVLVIGEGELRGDFVNQGLTQEQILGAALKPARLAAEPTAASAT.

ABC transporter domains are found at residues 6 to 245 and 262 to 507; these read LTMR…VGRE and LDVR…LKPA. An ATP-binding site is contributed by 38 to 45; that stretch reads GENGAGKS.

It belongs to the ABC transporter superfamily. Xylose importer (TC 3.A.1.2.4) family. In terms of assembly, the complex is composed of two ATP-binding proteins (XylG), two transmembrane proteins (XylH) and a solute-binding protein (XylF).

It is found in the cell inner membrane. The catalysed reaction is D-xylose(out) + ATP + H2O = D-xylose(in) + ADP + phosphate + H(+). In terms of biological role, part of the ABC transporter complex XylFGH involved in xylose import. Responsible for energy coupling to the transport system. The protein is Xylose import ATP-binding protein XylG of Burkholderia cenocepacia (strain HI2424).